Consider the following 194-residue polypeptide: 3-isopropylmalate dehydratase small subunit (194 aa).

This sequence belongs to the LeuD family. LeuD type 1 subfamily. Heterodimer of LeuC and LeuD.

The enzyme catalyses (2R,3S)-3-isopropylmalate = (2S)-2-isopropylmalate. The protein operates within amino-acid biosynthesis; L-leucine biosynthesis; L-leucine from 3-methyl-2-oxobutanoate: step 2/4. Its function is as follows. Catalyzes the isomerization between 2-isopropylmalate and 3-isopropylmalate, via the formation of 2-isopropylmaleate. This is 3-isopropylmalate dehydratase small subunit from Halalkalibacterium halodurans (strain ATCC BAA-125 / DSM 18197 / FERM 7344 / JCM 9153 / C-125) (Bacillus halodurans).